The chain runs to 355 residues: 3-dehydroquinate synthase (355 aa).

NAD(+) is bound by residues 71 to 76, 105 to 109, 129 to 130, K142, and K151; these read EGEERK, GVVGD, and TS. The Zn(2+) site is built by E184, H246, and H263.

It belongs to the sugar phosphate cyclases superfamily. Dehydroquinate synthase family. The cofactor is Co(2+). Zn(2+) is required as a cofactor. It depends on NAD(+) as a cofactor.

The protein localises to the cytoplasm. The catalysed reaction is 7-phospho-2-dehydro-3-deoxy-D-arabino-heptonate = 3-dehydroquinate + phosphate. Its pathway is metabolic intermediate biosynthesis; chorismate biosynthesis; chorismate from D-erythrose 4-phosphate and phosphoenolpyruvate: step 2/7. Its function is as follows. Catalyzes the conversion of 3-deoxy-D-arabino-heptulosonate 7-phosphate (DAHP) to dehydroquinate (DHQ). This Streptococcus pneumoniae serotype 19F (strain G54) protein is 3-dehydroquinate synthase.